The chain runs to 309 residues: Taste receptor type 2 member 20 (309 aa).

The Extracellular portion of the chain corresponds to 1 to 6; that stretch reads MMSFLH. A helical membrane pass occupies residues 7-27; it reads IVFSILVVVAFILGNFANGFI. Topologically, residues 28–46 are cytoplasmic; it reads ALINFIAWVKRQKISSADQ. A helical transmembrane segment spans residues 47–67; that stretch reads IIAALAVSRVGLLWVILLHWY. Residues 68–79 are Extracellular-facing; it reads STVLNPTSSNLK. Residues 80–100 traverse the membrane as a helical segment; it reads VIIFISNAWAVTNHFSIWLAT. Topologically, residues 101–125 are cytoplasmic; it reads SLSIFYLLKIVNFSRLIFHHLKRKA. The helical transmembrane segment at 126–146 threads the bilayer; sequence KSVVLVIVLGSLFFLVCHLVM. Topologically, residues 147 to 178 are extracellular; sequence KNTYINVWTEECEGNVTWKIKLRNAMHLSNLT. A helical transmembrane segment spans residues 179-199; it reads VAMLANLIPFTLTLISFLLLI. Over 200–229 the chain is Cytoplasmic; the sequence is YSLCKHLKKMQLHGKGSQDPSTKIHIKALQ. A helical membrane pass occupies residues 230–250; it reads TVTSFLILLAIYFLCLITSFW. Over 251–259 the chain is Extracellular; sequence NSKMRPKEI. Residues 260 to 280 form a helical membrane-spanning segment; that stretch reads VLMLCQAFGIIYPSFHSFILI. At 281–309 the chain is on the cytoplasmic side; that stretch reads WGNKTLKQTFLSVLWQVTCWAKGQNQSTP.

It belongs to the G-protein coupled receptor T2R family.

The protein localises to the membrane. Its function is as follows. Receptor that may play a role in the perception of bitterness and is gustducin-linked. May play a role in sensing the chemical composition of the gastrointestinal content. The activity of this receptor may stimulate alpha gustducin, mediate PLC-beta-2 activation and lead to the gating of TRPM5. The polypeptide is Taste receptor type 2 member 20 (TAS2R20) (Pan paniscus (Pygmy chimpanzee)).